Here is a 362-residue protein sequence, read N- to C-terminus: MAAWEAAFAARRRHEEEDTTRDSVFTYTNSNNTRGPFEGPNYHIAPRWVYNLTSVWMIFVVAASVFTNGLVLVATWKFKKLRHPLNWILVNLAVADLGETVIASTISVINQISGYFILGHPMCVVEGYTVSACGITALWSLAIISWERWFVVCKPFGNIKFDGKLAVAGILFSWLWSCAWTAPPIFGWSRYWPHGLKTSCGPDVFSGSSDPGVQSYMVVLMVTCCFFPLAIIILCYLQVWLAIRAVAAQQKESESTQKAEKEVSRMVVVMIVAYCFCWGPYTFFACFAAANPGYAFHPLAAALPAYFAKSATIYNPIIYVFMNRQFRNCILQLFGKKVDDGSEVSTSRTEVSSVSNSSVSPA.

Topologically, residues 1–49 (MAAWEAAFAARRRHEEEDTTRDSVFTYTNSNNTRGPFEGPNYHIAPRWV) are extracellular. Residue Asn31 is glycosylated (N-linked (GlcNAc...) asparagine). Residues 50–74 (YNLTSVWMIFVVAASVFTNGLVLVA) form a helical membrane-spanning segment. Residues 75-86 (TWKFKKLRHPLN) are Cytoplasmic-facing. Residues 87–112 (WILVNLAVADLGETVIASTISVINQI) traverse the membrane as a helical segment. The Extracellular portion of the chain corresponds to 113 to 126 (SGYFILGHPMCVVE). A disulfide bridge connects residues Cys123 and Cys200. A helical membrane pass occupies residues 127–146 (GYTVSACGITALWSLAIISW). Residues 147–165 (ERWFVVCKPFGNIKFDGKL) lie on the Cytoplasmic side of the membrane. The helical transmembrane segment at 166–189 (AVAGILFSWLWSCAWTAPPIFGWS) threads the bilayer. Over 190-215 (RYWPHGLKTSCGPDVFSGSSDPGVQS) the chain is Extracellular. A helical membrane pass occupies residues 216-243 (YMVVLMVTCCFFPLAIIILCYLQVWLAI). The Cytoplasmic segment spans residues 244–265 (RAVAAQQKESESTQKAEKEVSR). Residues 266 to 289 (MVVVMIVAYCFCWGPYTFFACFAA) traverse the membrane as a helical segment. At 290–297 (ANPGYAFH) the chain is on the extracellular side. The chain crosses the membrane as a helical span at residues 298-322 (PLAAALPAYFAKSATIYNPIIYVFM). The residue at position 309 (Lys309) is an N6-(retinylidene)lysine. The Cytoplasmic portion of the chain corresponds to 323 to 362 (NRQFRNCILQLFGKKVDDGSEVSTSRTEVSSVSNSSVSPA).

It belongs to the G-protein coupled receptor 1 family. Opsin subfamily. Post-translationally, phosphorylated on some or all of the serine and threonine residues present in the C-terminal region. In terms of tissue distribution, the color pigments are found in the cone photoreceptor cells.

It is found in the membrane. Functionally, visual pigments are the light-absorbing molecules that mediate vision. They consist of an apoprotein, opsin, covalently linked to cis-retinal. This is Red-sensitive opsin from Gallus gallus (Chicken).